Consider the following 360-residue polypeptide: Phospho-N-acetylmuramoyl-pentapeptide-transferase (360 aa).

The next 10 helical transmembrane spans lie at 27-47 (IVSL…LIAW), 72-92 (PTMG…MWAY), 94-114 (SNPY…VGFI), 132-152 (WKYF…YSIG), 168-188 (IMPQ…VGTS), 199-219 (GLAI…AWAT), 236-256 (AGEL…FLWF), 263-283 (VFMG…IAVL), 288-308 (FLLV…ILQV), and 338-358 (VIVR…ATLK).

It belongs to the glycosyltransferase 4 family. MraY subfamily. It depends on Mg(2+) as a cofactor.

It is found in the cell inner membrane. It catalyses the reaction UDP-N-acetyl-alpha-D-muramoyl-L-alanyl-gamma-D-glutamyl-meso-2,6-diaminopimeloyl-D-alanyl-D-alanine + di-trans,octa-cis-undecaprenyl phosphate = di-trans,octa-cis-undecaprenyl diphospho-N-acetyl-alpha-D-muramoyl-L-alanyl-D-glutamyl-meso-2,6-diaminopimeloyl-D-alanyl-D-alanine + UMP. The protein operates within cell wall biogenesis; peptidoglycan biosynthesis. Catalyzes the initial step of the lipid cycle reactions in the biosynthesis of the cell wall peptidoglycan: transfers peptidoglycan precursor phospho-MurNAc-pentapeptide from UDP-MurNAc-pentapeptide onto the lipid carrier undecaprenyl phosphate, yielding undecaprenyl-pyrophosphoryl-MurNAc-pentapeptide, known as lipid I. The polypeptide is Phospho-N-acetylmuramoyl-pentapeptide-transferase (Yersinia pestis bv. Antiqua (strain Angola)).